A 258-amino-acid chain; its full sequence is MLSRRIIPCLDVRDGRVVKGVKFRDHIDMGDIVELAMRYRDQGADELVFYDIGASPEGRSVDYAWVGRVARLIDIPFCVAGGIRDVETARAVLHAGADKISINSPALGRPQLISELADAFGVQCVVVGIDSIREEDGQWRVRRYTGDPSKTQALPMRTLDWVAEAQRLGAGEIVLNCMDNDGVRHGYDIAQLRQVRALCRVPLIASGGAGEMQHFADVFDQADADGALAASVFHSGAIPIPELKRFLRAQQIEVRDGQ.

Catalysis depends on residues aspartate 11 and aspartate 130.

The protein belongs to the HisA/HisF family. Heterodimer of HisH and HisF.

The protein localises to the cytoplasm. It catalyses the reaction 5-[(5-phospho-1-deoxy-D-ribulos-1-ylimino)methylamino]-1-(5-phospho-beta-D-ribosyl)imidazole-4-carboxamide + L-glutamine = D-erythro-1-(imidazol-4-yl)glycerol 3-phosphate + 5-amino-1-(5-phospho-beta-D-ribosyl)imidazole-4-carboxamide + L-glutamate + H(+). The protein operates within amino-acid biosynthesis; L-histidine biosynthesis; L-histidine from 5-phospho-alpha-D-ribose 1-diphosphate: step 5/9. Functionally, IGPS catalyzes the conversion of PRFAR and glutamine to IGP, AICAR and glutamate. The HisF subunit catalyzes the cyclization activity that produces IGP and AICAR from PRFAR using the ammonia provided by the HisH subunit. This chain is Imidazole glycerol phosphate synthase subunit HisF, found in Xanthomonas campestris pv. campestris (strain B100).